The following is a 609-amino-acid chain: Forkhead box protein O (609 aa).

2 disordered regions span residues 1 to 89 (MDGF…KNSS) and 181 to 263 (KSVR…SSCG). Thr43 is modified (phosphothreonine; by PKB/AKT1). Residues 62 to 79 (TKASNQQLASGDPQQAMQ) are compositionally biased toward polar residues. A compositionally biased stretch (low complexity) spans 80–89 (NANAAKKNSS). Positions 94–200 (WGNLSYADLI…ETSRYEKRRG (107 aa)) form a DNA-binding region, fork-head. Position 189 is a phosphoserine; by PKB/AKT1 (Ser189). 2 stretches are compositionally biased toward polar residues: residues 220 to 229 (ATPSPSSSVS) and 254 to 263 (RASSNASSCG). A Phosphoserine; by PKB/AKT1 modification is found at Ser257. Phosphoserine occurs at positions 260, 261, and 266. Disordered stretches follow at residues 321-365 (AASG…QGQG) and 384-411 (RDGLSPNSVTTTMSPAYPNSEPSSDSLN). Residues 327-339 (TQPPPPYQPPQQP) show a composition bias toward pro residues. Residues 388–397 (SPNSVTTTMS) are compositionally biased toward polar residues.

Interacts with melt.

Its subcellular location is the cytoplasm. It is found in the nucleus. Transcription factor involved in the regulation of the insulin signaling pathway. Consistently activates both the downstream target Thor\d4EBP and the feedback control target InR. Involved in negative regulation of the cell cycle, modulating cell growth and proliferation. In response to cellular stresses, such as nutrient deprivation or increased levels of reactive oxygen species, foxo is activated and inhibits growth through the action of target genes such as Thor. Foxo activated in the adult fat body can regulate lifespan in adults; an insulin peptide itself may function as one secondary messenger of insulin-regulated aging. Also regulates Lip4, homolog of human acid lipases, thereby acting as a key modulator of lipid metabolism by insulin signaling and integrates insulin responses to glucose and lipid homeostasis. This Drosophila virilis (Fruit fly) protein is Forkhead box protein O.